We begin with the raw amino-acid sequence, 563 residues long: Phospholipase B-like protein F (563 aa).

An N-terminal signal peptide occupies residues 1–21 (MKIINSFVFIFVLLFVFNTNA). N85, N107, N118, N121, N208, N312, and N537 each carry an N-linked (GlcNAc...) asparagine glycan.

Belongs to the phospholipase B-like family.

It localises to the secreted. Probable phospholipase. The protein is Phospholipase B-like protein F (plbF) of Dictyostelium discoideum (Social amoeba).